The chain runs to 117 residues: Large ribosomal subunit protein bL19 (117 aa).

This sequence belongs to the bacterial ribosomal protein bL19 family.

Functionally, this protein is located at the 30S-50S ribosomal subunit interface and may play a role in the structure and function of the aminoacyl-tRNA binding site. This is Large ribosomal subunit protein bL19 from Azobacteroides pseudotrichonymphae genomovar. CFP2.